A 1157-amino-acid polypeptide reads, in one-letter code: Probable inactive leucine-rich repeat receptor kinase XIAO (1157 aa).

An N-terminal signal peptide occupies residues 1–21 (MPPPPRLLFLLVMLLVVAAPG). Residue Asn58 is glycosylated (N-linked (GlcNAc...) asparagine). LRR repeat units lie at residues 101–125 (LVYL…LSRI), 127–149 (SLRA…FLAN), 150–172 (LTNL…VSFP), 173–196 (PSLK…VSAS), 198–220 (TSLQ…SLGT), 221–245 (LQDL…LSNC), 247–269 (ALLH…VAAI), 270–293 (PSLQ…AFGG), 296–319 (NSSL…VSLG), 320–343 (KDLQ…LAGA), 344–367 (GGLT…VGQL), 368–391 (TALQ…IGRC), 393–414 (ALQV…ALGG), 415–439 (LRRL…LGNL), 440–463 (SWLE…LFVL), 464–487 (GNLT…IGNL), 489–511 (ALQS…IGNL), 513–536 (NLRV…LFGL), 537–559 (PQLQ…GFSS), 561–583 (WSLR…TYGY), 584–608 (LPSL…LANC), 609–631 (SNLT…DFAR), 632–656 (LGEL…ISNC), 658–680 (SLVT…LSNL), 681–704 (SKLQ…LAQI), and 706–728 (GMLS…LGSR). Asn149 carries N-linked (GlcNAc...) asparagine glycosylation. Residues Asn192, Asn204, and Asn244 are each glycosylated (N-linked (GlcNAc...) asparagine). Asn296 is a glycosylation site (N-linked (GlcNAc...) asparagine). Asn438 is a glycosylation site (N-linked (GlcNAc...) asparagine). N-linked (GlcNAc...) asparagine glycans are attached at residues Asn465, Asn494, and Asn524. N-linked (GlcNAc...) asparagine glycosylation is found at Asn567, Asn607, Asn610, Asn655, Asn679, Asn692, and Asn711. The chain crosses the membrane as a helical span at residues 765-785 (LALLIGVVAATVLLLVLFCCC). The segment at 804–825 (VKKRRRSPGRGSGSSGTSTDSV) is disordered. Residues 849–1144 (FDEENVLSRG…LEGCRVGPDI (296 aa)) enclose the Protein kinase domain. Residues 855-863 (LSRGRHGLV), 930-932 (DYM), 936-939 (NLAT), 980-985 (DVKPQN), and Asp998 contribute to the ATP site.

It belongs to the protein kinase superfamily. Ser/Thr protein kinase family. As to expression, expressed in developing culm, coleoptile, primary root, young spikelet, young leaf blade and leaf sheath, floral meristem primordia, stamen primordia, and lemma and palea primordia.

The protein resides in the cell membrane. Functions in the early stages of organ development by regulating cell division rate. Is probably involved in the regulation of a number of cell-cycle genes. May act as regulator of brassinosteroid (BR) signaling and cell-cycle controlling organ growth. The protein is Probable inactive leucine-rich repeat receptor kinase XIAO of Oryza sativa subsp. japonica (Rice).